The primary structure comprises 370 residues: MKPTRVPKNPCFSSGPCAKHPGYSIEDLNDAPFGRSHRSKPGKEKLAEAIKRTRDMLGLPSDYLVGIVPASDTGAFEMCLWSMLGCRGVDVLVWESFSKEWATDITKQLKLKDTRVFEAEYGKLPDLENVDFKNDVVFVWNGTTSGVKVPNGDWIPDSREGLTLCDATSAVFAMDIPYHKLDVLTFSWQKVLGGEGAHGMLILSPRAVQRLESYTPAWPLPKIFRLTKGGKLNKEIFEGSTINTPSMLANEDWLATLKWAESVGGLKQLIQRTNENLAVFEAFVAKNNWIHFLAETKEIRSSTSVCFKVDLSEEKLKELIKMLENEKVAYDIGSYRDAPSGLRIWCGATIEKEDLECLCEWIEWAYDLVK.

Arginine 38 serves as a coordination point for L-glutamate. Positions 101, 143, 166, and 189 each coordinate pyridoxal 5'-phosphate. Residue lysine 190 is modified to N6-(pyridoxal phosphate)lysine. 243–244 (NT) is a binding site for pyridoxal 5'-phosphate.

This sequence belongs to the class-V pyridoxal-phosphate-dependent aminotransferase family. SerC subfamily. Homodimer. Requires pyridoxal 5'-phosphate as cofactor.

Its subcellular location is the cytoplasm. The enzyme catalyses O-phospho-L-serine + 2-oxoglutarate = 3-phosphooxypyruvate + L-glutamate. The catalysed reaction is 4-(phosphooxy)-L-threonine + 2-oxoglutarate = (R)-3-hydroxy-2-oxo-4-phosphooxybutanoate + L-glutamate. It functions in the pathway amino-acid biosynthesis; L-serine biosynthesis; L-serine from 3-phospho-D-glycerate: step 2/3. The protein operates within cofactor biosynthesis; pyridoxine 5'-phosphate biosynthesis; pyridoxine 5'-phosphate from D-erythrose 4-phosphate: step 3/5. Its function is as follows. Catalyzes the reversible conversion of 3-phosphohydroxypyruvate to phosphoserine and of 3-hydroxy-2-oxo-4-phosphonooxybutanoate to phosphohydroxythreonine. This chain is Phosphoserine aminotransferase, found in Methanosarcina mazei (strain ATCC BAA-159 / DSM 3647 / Goe1 / Go1 / JCM 11833 / OCM 88) (Methanosarcina frisia).